The chain runs to 800 residues: DNA topoisomerase 4 subunit A (800 aa).

The 465-residue stretch at 31–495 (LPDVRDGLKP…EIEEIKIDKE (465 aa)) folds into the Topo IIA-type catalytic domain. Y119 functions as the O-(5'-phospho-DNA)-tyrosine intermediate in the catalytic mechanism.

This sequence belongs to the type II topoisomerase GyrA/ParC subunit family. ParC type 2 subfamily. Heterotetramer composed of ParC and ParE.

It is found in the cell membrane. The catalysed reaction is ATP-dependent breakage, passage and rejoining of double-stranded DNA.. In terms of biological role, topoisomerase IV is essential for chromosome segregation. It relaxes supercoiled DNA. Performs the decatenation events required during the replication of a circular DNA molecule. The sequence is that of DNA topoisomerase 4 subunit A from Staphylococcus aureus (strain MW2).